The sequence spans 68 residues: Conotoxin tx3b (68 aa).

Residues 1-19 form the signal peptide; the sequence is MSKLGALLTICLLLFSLTA. Residues 20–52 constitute a propeptide that is removed on maturation; sequence VPLDGDQHADQPAQRLQDRIPTEDHPLFDPNKR. 3 disulfide bridges follow: C53–C67, C54–C63, and C59–C66. Residue M61 is modified to Methionine sulfoxide; partial. The residue at position 67 (C67) is a Cysteine amide.

As to expression, expressed by the venom duct.

The protein localises to the secreted. Intracranial injection into mice causes scratching, hyperactivity and circular motion. This chain is Conotoxin tx3b, found in Conus textile (Cloth-of-gold cone).